The sequence spans 510 residues: Lysine--tRNA ligase (510 aa).

Residues Glu420 and Glu427 each contribute to the Mg(2+) site.

The protein belongs to the class-II aminoacyl-tRNA synthetase family. In terms of assembly, homodimer. Mg(2+) is required as a cofactor.

It is found in the cytoplasm. It catalyses the reaction tRNA(Lys) + L-lysine + ATP = L-lysyl-tRNA(Lys) + AMP + diphosphate. The sequence is that of Lysine--tRNA ligase from Vibrio vulnificus (strain YJ016).